The following is a 293-amino-acid chain: Phosphatidylglycerol--prolipoprotein diacylglyceryl transferase (293 aa).

Helical transmembrane passes span 45–65 (FELR…YFVA), 81–101 (ELIF…YVLF), 115–135 (IWEG…TGFL), and 144–164 (FTFL…QAIG). R165 serves as a coordination point for a 1,2-diacyl-sn-glycero-3-phospho-(1'-sn-glycerol). Transmembrane regions (helical) follow at residues 204–224 (PTFL…SVYF), 231–249 (HGEV…RIVI), and 262–282 (IKAA…GFLI).

Belongs to the Lgt family.

The protein localises to the cell inner membrane. It catalyses the reaction L-cysteinyl-[prolipoprotein] + a 1,2-diacyl-sn-glycero-3-phospho-(1'-sn-glycerol) = an S-1,2-diacyl-sn-glyceryl-L-cysteinyl-[prolipoprotein] + sn-glycerol 1-phosphate + H(+). The protein operates within protein modification; lipoprotein biosynthesis (diacylglyceryl transfer). Its function is as follows. Catalyzes the transfer of the diacylglyceryl group from phosphatidylglycerol to the sulfhydryl group of the N-terminal cysteine of a prolipoprotein, the first step in the formation of mature lipoproteins. The sequence is that of Phosphatidylglycerol--prolipoprotein diacylglyceryl transferase from Thermotoga maritima (strain ATCC 43589 / DSM 3109 / JCM 10099 / NBRC 100826 / MSB8).